A 64-amino-acid chain; its full sequence is Large ribosomal subunit protein bL35 (64 aa).

The segment covering 1–28 (MSKAKTHSGAAKRFKKTASGYKHKHAFK) has biased composition (basic residues). The segment at 1–51 (MSKAKTHSGAAKRFKKTASGYKHKHAFKSHILTKMTTKRKRQLRGTSLLNA) is disordered.

This sequence belongs to the bacterial ribosomal protein bL35 family.

In Saccharophagus degradans (strain 2-40 / ATCC 43961 / DSM 17024), this protein is Large ribosomal subunit protein bL35.